The sequence spans 296 residues: Diaminopimelate epimerase (296 aa).

Substrate-binding residues include Asn17, Gln49, and Asn69. Cys78 (proton donor) is an active-site residue. Substrate is bound by residues 79–80 (GN), Asn171, Asn205, and 223–224 (ER). Residue Cys232 is the Proton acceptor of the active site. Substrate is bound at residue 233–234 (GT).

Belongs to the diaminopimelate epimerase family. As to quaternary structure, homodimer.

Its subcellular location is the cytoplasm. The enzyme catalyses (2S,6S)-2,6-diaminopimelate = meso-2,6-diaminopimelate. The protein operates within amino-acid biosynthesis; L-lysine biosynthesis via DAP pathway; DL-2,6-diaminopimelate from LL-2,6-diaminopimelate: step 1/1. Its function is as follows. Catalyzes the stereoinversion of LL-2,6-diaminopimelate (L,L-DAP) to meso-diaminopimelate (meso-DAP), a precursor of L-lysine and an essential component of the bacterial peptidoglycan. In Methylorubrum extorquens (strain PA1) (Methylobacterium extorquens), this protein is Diaminopimelate epimerase.